The sequence spans 702 residues: ATP-dependent zinc metalloprotease FtsH (702 aa).

The Cytoplasmic segment spans residues 1-26; sequence MKKRNKGLVEQTTTEKNNFSRKTAWK. A helical membrane pass occupies residues 27-47; the sequence is VFWWVIILAVVIGVLAYIFSP. Residues 48–175 are Extracellular-facing; the sequence is RAATAVVESW…FIAPDTRARD (128 aa). The chain crosses the membrane as a helical span at residues 176-196; it reads VLNGLFGLLPIIIFVVFFLLF. The Cytoplasmic segment spans residues 197 to 702; that stretch reads WRSARGISAG…EVKPESETNS (506 aa). ATP is bound at residue 271–278; that stretch reads GPPGTGKT. His493 lines the Zn(2+) pocket. Residue Glu494 is part of the active site. Residues His497 and Asp572 each contribute to the Zn(2+) site. Positions 682-702 are disordered; that stretch reads EQQAKQKLNKSEVKPESETNS. Residues 690–702 are compositionally biased toward basic and acidic residues; that stretch reads NKSEVKPESETNS.

The protein in the central section; belongs to the AAA ATPase family. This sequence in the C-terminal section; belongs to the peptidase M41 family. As to quaternary structure, homohexamer. It depends on Zn(2+) as a cofactor.

It localises to the cell membrane. Its function is as follows. Acts as a processive, ATP-dependent zinc metallopeptidase for both cytoplasmic and membrane proteins. Plays a role in the quality control of integral membrane proteins. In Mycoplasma genitalium (strain ATCC 33530 / DSM 19775 / NCTC 10195 / G37) (Mycoplasmoides genitalium), this protein is ATP-dependent zinc metalloprotease FtsH.